A 329-amino-acid polypeptide reads, in one-letter code: Stimulator of interferon genes protein (329 aa).

Topologically, residues 1 to 4 (MACV) are cytoplasmic. A helical transmembrane segment spans residues 5–25 (LAIGSILFVWILGKGKYSGAQ). Residue leucine 26 is a topological domain, lumenal. The chain crosses the membrane as a helical span at residues 27–52 (IYRMATNFAISQGCCLVTCACELTEE). Residues 53–74 (IKHLHTRYNGHYWRALKASFNL) are Cytoplasmic-facing. Residues 75–88 (SCAAFVTAILCYVF) form a helical membrane-spanning segment. Over 89 to 98 (YEPKLMASLP) the chain is Lumenal. Residues 99 to 116 (LTIDITLTLLSWLFCWIL) traverse the membrane as a helical segment. The Cytoplasmic portion of the chain corresponds to 117–329 (GIQGPTPATI…QQHSEEYSML (213 aa)). The segment at 135–325 (LNVAHGLAWS…KHIRQQHSEE (191 aa)) is cyclic dinucleotide-binding domain (CBD). 2',3'-cGAMP contacts are provided by serine 144, tyrosine 149, arginine 220, and threonine 245. Residues serine 144, tyrosine 149, 220–223 (RVFK), and threonine 245 each bind 3',3'-c-di-GMP.

This sequence belongs to the STING family. As to quaternary structure, homodimer; forms a homodimer in absence of cyclic nucleotide (c-di-GMP or cGAMP). Homotetramer; in presence of cyclic nucleotide (c-di-GMP or cGAMP), forms tetramers and higher-order oligomers through side-by-side packing.

It is found in the endoplasmic reticulum membrane. The protein localises to the cytoplasm. The protein resides in the perinuclear region. It localises to the endoplasmic reticulum-Golgi intermediate compartment membrane. Its subcellular location is the golgi apparatus membrane. It is found in the cytoplasmic vesicle. The protein localises to the autophagosome membrane. It carries out the reaction H(+)(in) = H(+)(out). In terms of biological role, sensor of cytosolic DNA from bacteria and viruses that promotes autophagy. Acts by recognizing and binding cyclic GMP-AMP (cGAMP), a messenger produced by CGAS in response to DNA in the cytosol. Exhibits guanine base-specific ligand recognition: binds 3'-3'linked cGAMP, 2'-3' linked cGAMP and 3'-3' linked c-di-GMP with much greater affinity as compared to 3'-3' linked c-di-AMP. Following cGAMP-binding, promotes the formation of autophagosomes, leading to target cytosolic DNA for degradation by the lysosome. Promotes autophagy by acting as a proton channel that directs proton efflux from the Golgi to facilitate LC3 lipidation. Lacks the C-terminal tail (CTT) found in other vertebrate orthologs which is essential for interferon signaling. The protein is Stimulator of interferon genes protein of Xenopus tropicalis (Western clawed frog).